Here is a 197-residue protein sequence, read N- to C-terminus: Small ribosomal subunit protein uS4c (197 aa).

The S4 RNA-binding domain occupies Met-85–Asn-161.

The protein belongs to the universal ribosomal protein uS4 family. In terms of assembly, part of the 30S ribosomal subunit. Contacts protein S5. The interaction surface between S4 and S5 is involved in control of translational fidelity.

The protein localises to the plastid. Functionally, one of the primary rRNA binding proteins, it binds directly to 16S rRNA where it nucleates assembly of the body of the 30S subunit. Its function is as follows. With S5 and S12 plays an important role in translational accuracy. This chain is Small ribosomal subunit protein uS4c (rps4), found in Cuscuta sandwichiana (Kauna'oa).